Here is a 277-residue protein sequence, read N- to C-terminus: Phosphate import ATP-binding protein PstB 2 (277 aa).

One can recognise an ABC transporter domain in the interval 31–272; sequence IEVPGLNLFY…PAKKQTEDYI (242 aa). 63 to 70 contributes to the ATP binding site; that stretch reads GPSGCGKS.

The protein belongs to the ABC transporter superfamily. Phosphate importer (TC 3.A.1.7) family. The complex is composed of two ATP-binding proteins (PstB), two transmembrane proteins (PstC and PstA) and a solute-binding protein (PstS).

It is found in the cell inner membrane. It catalyses the reaction phosphate(out) + ATP + H2O = ADP + 2 phosphate(in) + H(+). In terms of biological role, part of the ABC transporter complex PstSACB involved in phosphate import. Responsible for energy coupling to the transport system. In Pseudomonas syringae pv. syringae (strain B728a), this protein is Phosphate import ATP-binding protein PstB 2.